A 249-amino-acid chain; its full sequence is Secreted flagellin C (249 aa).

Post-translationally, the secreted form is about 1 kDa larger than the whole cell lysate form, presumably due to post-translational modification. A 22 kDa form is also found in the secreted fraction, probably resulting from proteolysis.

It localises to the secreted. The protein resides in the host cell surface. Functionally, plays a role in virulence. In Campylobacter jejuni subsp. jejuni serotype O:2 (strain ATCC 700819 / NCTC 11168), this protein is Secreted flagellin C (flaC).